The following is a 121-amino-acid chain: Aspartate 1-decarboxylase (121 aa).

Ser25 (schiff-base intermediate with substrate; via pyruvic acid) is an active-site residue. Position 25 is a pyruvic acid (Ser) (Ser25). Thr57 contacts substrate. The active-site Proton donor is Tyr58. 73-75 (GAA) lines the substrate pocket.

The protein belongs to the PanD family. In terms of assembly, heterooctamer of four alpha and four beta subunits. Pyruvate serves as cofactor. In terms of processing, is synthesized initially as an inactive proenzyme, which is activated by self-cleavage at a specific serine bond to produce a beta-subunit with a hydroxyl group at its C-terminus and an alpha-subunit with a pyruvoyl group at its N-terminus.

It localises to the cytoplasm. The enzyme catalyses L-aspartate + H(+) = beta-alanine + CO2. It functions in the pathway cofactor biosynthesis; (R)-pantothenate biosynthesis; beta-alanine from L-aspartate: step 1/1. In terms of biological role, catalyzes the pyruvoyl-dependent decarboxylation of aspartate to produce beta-alanine. This is Aspartate 1-decarboxylase from Maricaulis maris (strain MCS10) (Caulobacter maris).